Consider the following 361-residue polypeptide: Phospho-N-acetylmuramoyl-pentapeptide-transferase (361 aa).

A run of 10 helical transmembrane segments spans residues 25–45 (RAVL…PAVI), 73–93 (TMGG…WADL), 97–117 (YVWL…VDDW), 134–154 (YFWQ…TASL), 168–188 (ATFG…IVGA), 200–220 (GLAI…AYVA), 237–257 (AGEL…FLWF), 264–284 (VFMG…VAVV), 289–309 (IILF…MIQV), and 338–358 (QVVV…LSSL).

It belongs to the glycosyltransferase 4 family. MraY subfamily. The cofactor is Mg(2+).

The protein resides in the cell inner membrane. The catalysed reaction is UDP-N-acetyl-alpha-D-muramoyl-L-alanyl-gamma-D-glutamyl-meso-2,6-diaminopimeloyl-D-alanyl-D-alanine + di-trans,octa-cis-undecaprenyl phosphate = di-trans,octa-cis-undecaprenyl diphospho-N-acetyl-alpha-D-muramoyl-L-alanyl-D-glutamyl-meso-2,6-diaminopimeloyl-D-alanyl-D-alanine + UMP. It functions in the pathway cell wall biogenesis; peptidoglycan biosynthesis. Functionally, catalyzes the initial step of the lipid cycle reactions in the biosynthesis of the cell wall peptidoglycan: transfers peptidoglycan precursor phospho-MurNAc-pentapeptide from UDP-MurNAc-pentapeptide onto the lipid carrier undecaprenyl phosphate, yielding undecaprenyl-pyrophosphoryl-MurNAc-pentapeptide, known as lipid I. This Thiobacillus denitrificans (strain ATCC 25259 / T1) protein is Phospho-N-acetylmuramoyl-pentapeptide-transferase.